A 957-amino-acid chain; its full sequence is Glycine dehydrogenase (decarboxylating) (957 aa).

At Lys708 the chain carries N6-(pyridoxal phosphate)lysine.

It belongs to the GcvP family. As to quaternary structure, the glycine cleavage system is composed of four proteins: P, T, L and H. Pyridoxal 5'-phosphate is required as a cofactor.

The enzyme catalyses N(6)-[(R)-lipoyl]-L-lysyl-[glycine-cleavage complex H protein] + glycine + H(+) = N(6)-[(R)-S(8)-aminomethyldihydrolipoyl]-L-lysyl-[glycine-cleavage complex H protein] + CO2. In terms of biological role, the glycine cleavage system catalyzes the degradation of glycine. The P protein binds the alpha-amino group of glycine through its pyridoxal phosphate cofactor; CO(2) is released and the remaining methylamine moiety is then transferred to the lipoamide cofactor of the H protein. This Escherichia coli (strain UTI89 / UPEC) protein is Glycine dehydrogenase (decarboxylating).